The following is a 194-amino-acid chain: ATP-dependent Clp protease proteolytic subunit (194 aa).

S98 acts as the Nucleophile in catalysis. H123 is an active-site residue.

This sequence belongs to the peptidase S14 family. As to quaternary structure, fourteen ClpP subunits assemble into 2 heptameric rings which stack back to back to give a disk-like structure with a central cavity, resembling the structure of eukaryotic proteasomes.

The protein resides in the cytoplasm. The catalysed reaction is Hydrolysis of proteins to small peptides in the presence of ATP and magnesium. alpha-casein is the usual test substrate. In the absence of ATP, only oligopeptides shorter than five residues are hydrolyzed (such as succinyl-Leu-Tyr-|-NHMec, and Leu-Tyr-Leu-|-Tyr-Trp, in which cleavage of the -Tyr-|-Leu- and -Tyr-|-Trp bonds also occurs).. Cleaves peptides in various proteins in a process that requires ATP hydrolysis. Has a chymotrypsin-like activity. Plays a major role in the degradation of misfolded proteins. This Staphylococcus epidermidis (strain ATCC 35984 / DSM 28319 / BCRC 17069 / CCUG 31568 / BM 3577 / RP62A) protein is ATP-dependent Clp protease proteolytic subunit.